The chain runs to 107 residues: QILLTQSPAIMSASPGQKVTMTCSASSSVSYMHWYQQKSGTSPKRWIYDTSKLASGVPARFSGSGSATSYSLTITSMQAEDAATYYCQQWSSNPLTFGAGTKLXLKR.

The framework-1 stretch occupies residues 1 to 23 (QILLTQSPAIMSASPGQKVTMTC). A disulfide bridge connects residues Cys23 and Cys87. A complementarity-determining-1 region spans residues 24-33 (SASSSVSYMH). The tract at residues 34–48 (WYQQKSGTSPKRWIY) is framework-2. The complementarity-determining-2 stretch occupies residues 49–55 (DTSKLAS). The tract at residues 56–87 (GVPARFSGSGSATSYSLTITSMQAEDAATYYC) is framework-3. Residues 88-96 (QQWSSNPLT) are complementarity-determining-3. The tract at residues 97-106 (FGAGTKLXLK) is framework-4.

In terms of biological role, anti-2-phenyl oxazolone (PHOX) Antibody. The polypeptide is Ig kappa chain V-VI region NQ2-48.2.2 (Mus musculus (Mouse)).